A 143-amino-acid polypeptide reads, in one-letter code: Transcription antitermination protein NusB (143 aa).

It belongs to the NusB family.

Its function is as follows. Involved in transcription antitermination. Required for transcription of ribosomal RNA (rRNA) genes. Binds specifically to the boxA antiterminator sequence of the ribosomal RNA (rrn) operons. This is Transcription antitermination protein NusB from Dehalococcoides mccartyi (strain ATCC BAA-2266 / KCTC 15142 / 195) (Dehalococcoides ethenogenes (strain 195)).